The chain runs to 71 residues: Phosphatidylinositol N-acetylglucosaminyltransferase subunit Y (71 aa).

Met-1 is a topological domain (cytoplasmic). Residues 2 to 21 form a helical membrane-spanning segment; sequence FFSLPVLTVLIPLVSLTGLL. The Lumenal portion of the chain corresponds to 22–44; sequence YSASVEEDFPNGCTSTASLCFYS. A helical transmembrane segment spans residues 45 to 65; that stretch reads LLLPITLPVYVFFHLWTWMGL. Residues 66 to 71 lie on the Cytoplasmic side of the membrane; the sequence is KLFRHN.

As to quaternary structure, component of the glycosylphosphatidylinositol-N-acetylglucosaminyltransferase (GPI-GnT) complex composed at least by PIGA, PIGC, PIGH, PIGP, PIGQ, PIGY and DPM2.

The protein localises to the endoplasmic reticulum membrane. It participates in glycolipid biosynthesis; glycosylphosphatidylinositol-anchor biosynthesis. Part of the glycosylphosphatidylinositol-N-acetylglucosaminyltransferase (GPI-GnT) complex that catalyzes the transfer of N-acetylglucosamine from UDP-N-acetylglucosamine to phosphatidylinositol and participates in the first step of GPI biosynthesis. May act by regulating the catalytic subunit PIGA. The chain is Phosphatidylinositol N-acetylglucosaminyltransferase subunit Y from Xenopus tropicalis (Western clawed frog).